The chain runs to 397 residues: Nuclear egress protein 2 (397 aa).

At 1–358 (MEMNKVLHQD…GPSRPQSGPW (358 aa)) the chain is on the perinuclear space side. Disordered stretches follow at residues 205 to 245 (RTAG…PPPP) and 291 to 332 (AAAG…PSLE). Residue Ser216 is modified to Phosphoserine. 2 stretches are compositionally biased toward low complexity: residues 224 to 239 (PSCS…AAAG) and 291 to 301 (AAAGQDVGGSA). Residues 310–322 (SRRRGVSTHHRHP) show a composition bias toward basic residues. Residues 359–381 (LPARFATLGPLVLALLLVLALLW) traverse the membrane as a helical segment. Residues 382–397 (RGHGQSSSPTRSAHRD) are Nuclear-facing.

This sequence belongs to the herpesviridae NEC2 protein family. In terms of assembly, forms a heterohexameric complex with NEC1. Interacts with host UBA7 and RNF170; this interaction promotes UBA7 proteasomal degradation. In terms of processing, phosphorylated. Phosphorylation by viral kinase UL97 at Ser-216 plays an important role for correct viral nuclear egress complex (NEC) localization.

The protein resides in the host nucleus inner membrane. Functionally, plays an essential role in virion nuclear egress, the first step of virion release from infected cell. Within the host nucleus, NEC1 interacts with the newly formed capsid through the vertexes and directs it to the inner nuclear membrane by associating with NEC2. Induces the budding of the capsid at the inner nuclear membrane as well as its envelopment into the perinuclear space. There, the NEC1/NEC2 complex promotes the fusion of the enveloped capsid with the outer nuclear membrane and the subsequent release of the viral capsid into the cytoplasm where it will reach the secondary budding sites in the host Golgi or trans-Golgi network. Inhibits host ISGylation and subsequent innate antiviral response by targeting host UBA7 for proteasomal degradation. This is Nuclear egress protein 2 from Human cytomegalovirus (strain AD169) (HHV-5).